The chain runs to 171 residues: Lipoprotein signal peptidase (171 aa).

A run of 3 helical transmembrane segments spans residues 8-28 (SFLWLSAVAFVVDLLTKYIVV), 64-84 (WQQYFFILLALAISGMLVYFL), and 99-119 (ALIIGGALANMVDRAYNGFVV). Catalysis depends on residues Asp120 and Asp138. The chain crosses the membrane as a helical span at residues 133-153 (VFNIADIAICIGAGLLALDAF).

This sequence belongs to the peptidase A8 family.

It is found in the cell inner membrane. It catalyses the reaction Release of signal peptides from bacterial membrane prolipoproteins. Hydrolyzes -Xaa-Yaa-Zaa-|-(S,diacylglyceryl)Cys-, in which Xaa is hydrophobic (preferably Leu), and Yaa (Ala or Ser) and Zaa (Gly or Ala) have small, neutral side chains.. Its pathway is protein modification; lipoprotein biosynthesis (signal peptide cleavage). Its function is as follows. This protein specifically catalyzes the removal of signal peptides from prolipoproteins. The protein is Lipoprotein signal peptidase of Haemophilus influenzae (strain PittGG).